The chain runs to 220 residues: Charged multivesicular body protein 5 (220 aa).

Residues Met-1–Pro-10 are compositionally biased toward basic residues. A disordered region spans residues Met-1 to Arg-27. Coiled-coil stretches lie at residues Asp-25 to Gly-55 and Lys-121 to Tyr-153. The segment at Asp-178–Gly-206 is disordered.

This sequence belongs to the SNF7 family. In terms of assembly, probable peripherally associated component of the endosomal sorting required for transport complex III (ESCRT-III).

It is found in the cytoplasm. The protein localises to the cytosol. Its subcellular location is the endosome membrane. Functionally, probable peripherally associated component of the endosomal sorting required for transport complex III (ESCRT-III) which is involved in multivesicular bodies (MVBs) formation and sorting of endosomal cargo proteins into MVBs. MVBs contain intraluminal vesicles (ILVs) that are generated by invagination and scission from the limiting membrane of the endosome and mostly are delivered to lysosomes enabling degradation of membrane proteins, such as stimulated growth factor receptors, lysosomal enzymes and lipids. This chain is Charged multivesicular body protein 5 (chmp5), found in Danio rerio (Zebrafish).